The chain runs to 144 residues: Large ribosomal subunit protein uL15 (144 aa).

A disordered region spans residues 1–49 (MRLNTLSPAAGSKSAPKRVGRGIGSGLGKTAGRGHKGQKSRSGGGVRVG). The span at 21–31 (RGIGSGLGKTA) shows a compositional bias: gly residues.

The protein belongs to the universal ribosomal protein uL15 family. Part of the 50S ribosomal subunit.

Functionally, binds to the 23S rRNA. In Shewanella frigidimarina (strain NCIMB 400), this protein is Large ribosomal subunit protein uL15.